The following is a 263-amino-acid chain: MDVNRRIGVKDALLALLLALLQGCPLGETAPNASPLVGSNWGNPRRYVHLQTSTDMSNFYLEIRLDGTVRKSTARTSYSVILLKADTRERIAILGVKSNRYLCMDLEGSPFSSPTCIRDDCLFNHSLLENNRDVYYSSRTGILFNLEGSRQVFVVGQNVPQTSLFLPRTNTVPLERLLLHRDKRNQVVDPSDPHRVAVGRAEEGSDSRALQEDDADLEVETEVEVGDDGRNASRERLQAPSDHDPWGVFSSNPGSPRSSGTVG.

An N-terminal signal peptide occupies residues 1–23 (MDVNRRIGVKDALLALLLALLQG). An intrachain disulfide couples C103 to C121. N-linked (GlcNAc...) asparagine glycosylation is present at N124. Positions 198–211 (VGRAEEGSDSRALQ) are enriched in basic and acidic residues. The interval 198 to 263 (VGRAEEGSDS…GSPRSSGTVG (66 aa)) is disordered. Residues 212–226 (EDDADLEVETEVEVG) show a composition bias toward acidic residues. Over residues 227 to 245 (DDGRNASRERLQAPSDHDP) the composition is skewed to basic and acidic residues. The N-linked (GlcNAc...) asparagine glycan is linked to N231. Residues 249-263 (FSSNPGSPRSSGTVG) are compositionally biased toward polar residues.

It belongs to the heparin-binding growth factors family.

Its subcellular location is the secreted. This chain is Fibroblast growth factor 23 (fgf23), found in Tetraodon nigroviridis (Spotted green pufferfish).